Consider the following 87-residue polypeptide: Cell division topological specificity factor (87 aa).

This sequence belongs to the MinE family.

Prevents the cell division inhibition by proteins MinC and MinD at internal division sites while permitting inhibition at polar sites. This ensures cell division at the proper site by restricting the formation of a division septum at the midpoint of the long axis of the cell. In Roseiflexus castenholzii (strain DSM 13941 / HLO8), this protein is Cell division topological specificity factor.